Reading from the N-terminus, the 358-residue chain is Phosphate acyltransferase (358 aa).

The protein belongs to the PlsX family. In terms of assembly, homodimer. Probably interacts with PlsY.

It localises to the cytoplasm. It carries out the reaction a fatty acyl-[ACP] + phosphate = an acyl phosphate + holo-[ACP]. Its pathway is lipid metabolism; phospholipid metabolism. Functionally, catalyzes the reversible formation of acyl-phosphate (acyl-PO(4)) from acyl-[acyl-carrier-protein] (acyl-ACP). This enzyme utilizes acyl-ACP as fatty acyl donor, but not acyl-CoA. The polypeptide is Phosphate acyltransferase (Escherichia fergusonii (strain ATCC 35469 / DSM 13698 / CCUG 18766 / IAM 14443 / JCM 21226 / LMG 7866 / NBRC 102419 / NCTC 12128 / CDC 0568-73)).